A 186-amino-acid chain; its full sequence is Hydra actinoporin-like toxin 1 (186 aa).

A signal peptide spans 1-18 (MLLYICLVNLLLPLSVGA). Residues 29 to 48 (KVGVDAALQQIDDVWKGKTV) form an N-terminal region region. Residues 158–160 (RAG) carry the Cell attachment site, crucial for protein stability motif.

It belongs to the actinoporin family. HALT subfamily. As to quaternary structure, octamer or nonamer in membranes. Monomer in the soluble state. In vitro, interacts with folate receptor alpha (of target organism). Expressed female germline during oogenesis.

Its subcellular location is the nematocyst. The protein resides in the secreted. The protein localises to the target cell membrane. Pore-forming protein that forms hydrophilic pores and causes cytolysis. Compared to equinatoxin-2 (AC P61914), it reveals lower cytolysis activity (5-12-fold difference, tested on erythrocytes), a larger pore size (probably 2-3 nm) and different affinity to membrane lipids (100-fold lower affinity to sphingomyelin). Binds to sulfatides (SFT) as well as to the two sphingolipids, lysophosphatidic acid (LPA) and sphingosine-1-phosphate (S1P). It seems to bind more strongly to LPA than to S1P and SFT. Shows cytolytic activity on HeLa cells, with a different potency than its paralogs (from most potent to less potent: HALT-4&gt;HALT-6~HALT-1&gt;HALT-3&gt;HALT-7&gt;HALT-2). Pore formation is a multi-step process that involves specific recognition of membrane lipid by a protein aromatic residues rich region, firm binding to the membrane (mainly driven by hydrophobic interactions) accompanied by the transfer of the N-terminal region to the lipid-water interface and finally pore formation after oligomerization of monomers. In vitro, binds to the folate receptor alpha (FOLR1), a GPI-anchored membrane protein that plays a major role in the uptake of folate/folic acid into cells via endocytosis, suggesting a possible involvement of this receptor in the mechanism of HALT-1-induced cell lysis. In vivo, does not cause visible paralysis in larvae of the blowfly Sarcophaga faculata, the most common arthropod prey of Hydra. The chain is Hydra actinoporin-like toxin 1 from Hydra vulgaris (Hydra).